Reading from the N-terminus, the 63-residue chain is Eumenitin VP1 (63 aa).

The N-terminal stretch at Met-1–Ala-22 is a signal peptide. 5 AXPX repeats span residues Ala-22 to Leu-25, Ala-26 to Ala-29, Ala-32 to Asp-35, Ala-40 to Leu-43, and Ala-44 to Glu-47. Residues Glu-23–Ala-48 constitute a propeptide that is removed on maturation.

Expressed by the venom gland.

It is found in the secreted. The protein resides in the target cell membrane. In terms of biological role, antimicrobial peptide with activities against the fungi B.cinerea (MIC=5 uM) and C.albicans (MIC=100 uM), the Gram-negative bacterium E.coli (MIC=25 uM) and the Gram-positive bacterium S.aureus (MIC=100 uM). Shows cytolytic activity against insect cell lines. Has no hemolytic activity against human erythrocytes. In vivo, peptide injection in the vicinity of the head and thorax of lepidopteran larvae induces feeding disorder followed by death due to starvation. This Eumenes pomiformis (Potter wasp) protein is Eumenitin VP1.